A 177-amino-acid polypeptide reads, in one-letter code: Large ribosomal subunit protein uL6 (177 aa).

This sequence belongs to the universal ribosomal protein uL6 family. As to quaternary structure, part of the 50S ribosomal subunit.

This protein binds to the 23S rRNA, and is important in its secondary structure. It is located near the subunit interface in the base of the L7/L12 stalk, and near the tRNA binding site of the peptidyltransferase center. The polypeptide is Large ribosomal subunit protein uL6 (Vibrio vulnificus (strain CMCP6)).